The primary structure comprises 145 residues: D-aminoacyl-tRNA deacylase (145 aa).

The Gly-cisPro motif, important for rejection of L-amino acids motif lies at 137-138 (GP).

This sequence belongs to the DTD family. Homodimer.

The protein localises to the cytoplasm. The catalysed reaction is glycyl-tRNA(Ala) + H2O = tRNA(Ala) + glycine + H(+). It carries out the reaction a D-aminoacyl-tRNA + H2O = a tRNA + a D-alpha-amino acid + H(+). Functionally, an aminoacyl-tRNA editing enzyme that deacylates mischarged D-aminoacyl-tRNAs. Also deacylates mischarged glycyl-tRNA(Ala), protecting cells against glycine mischarging by AlaRS. Acts via tRNA-based rather than protein-based catalysis; rejects L-amino acids rather than detecting D-amino acids in the active site. By recycling D-aminoacyl-tRNA to D-amino acids and free tRNA molecules, this enzyme counteracts the toxicity associated with the formation of D-aminoacyl-tRNA entities in vivo and helps enforce protein L-homochirality. The sequence is that of D-aminoacyl-tRNA deacylase from Alteromonas mediterranea (strain DSM 17117 / CIP 110805 / LMG 28347 / Deep ecotype).